A 134-amino-acid chain; its full sequence is (R)-specific enoyl-CoA hydratase (134 aa).

The region spanning 5–119 (SLEVGQKARL…ATLTTRIFTQ (115 aa)) is the MaoC-like domain. A (3R)-3-hydroxyacyl-CoA is bound by residues 32–37 (DFNPLH), Gly55, and Phe84.

In terms of assembly, homodimer.

The catalysed reaction is a (3R)-3-hydroxyacyl-CoA = a (2E)-enoyl-CoA + H2O. In terms of biological role, catalyzes the hydration of trans-2-enoyl-CoA with a chain-length of 4-6 carbon atoms, forming the corresponding (3R)-3-hydroxyacyl-CoA. The sequence is that of (R)-specific enoyl-CoA hydratase (phaJ) from Aeromonas caviae (Aeromonas punctata).